Consider the following 341-residue polypeptide: Dihydroorotate dehydrogenase (quinone) (341 aa).

FMN-binding positions include A59 to K63 and T83. Residue K63 coordinates substrate. N108–F112 provides a ligand contact to substrate. FMN contacts are provided by N136 and N169. A substrate-binding site is contributed by N169. S172 serves as the catalytic Nucleophile. N174 contacts substrate. The FMN site is built by K214 and T242. N243–T244 provides a ligand contact to substrate. Residues G265, G294, and Y315–S316 contribute to the FMN site.

It belongs to the dihydroorotate dehydrogenase family. Type 2 subfamily. In terms of assembly, monomer. FMN is required as a cofactor.

The protein localises to the cell membrane. It carries out the reaction (S)-dihydroorotate + a quinone = orotate + a quinol. It participates in pyrimidine metabolism; UMP biosynthesis via de novo pathway; orotate from (S)-dihydroorotate (quinone route): step 1/1. Functionally, catalyzes the conversion of dihydroorotate to orotate with quinone as electron acceptor. This is Dihydroorotate dehydrogenase (quinone) from Neisseria meningitidis serogroup C (strain 053442).